The sequence spans 365 residues: Phosphate acyltransferase (365 aa).

Belongs to the PlsX family. In terms of assembly, homodimer. Probably interacts with PlsY.

It localises to the cytoplasm. It catalyses the reaction a fatty acyl-[ACP] + phosphate = an acyl phosphate + holo-[ACP]. The protein operates within lipid metabolism; phospholipid metabolism. Its function is as follows. Catalyzes the reversible formation of acyl-phosphate (acyl-PO(4)) from acyl-[acyl-carrier-protein] (acyl-ACP). This enzyme utilizes acyl-ACP as fatty acyl donor, but not acyl-CoA. This is Phosphate acyltransferase from Klebsiella pneumoniae (strain 342).